The sequence spans 379 residues: Cytochrome b (379 aa).

4 consecutive transmembrane segments (helical) span residues 33-53 (FGSLLGLCLIVQTLTGLFLAM), 77-98 (WLIRNLHANGASMFFICLYLHI), 113-133 (WNIGVVLLLLVMAAAFVGYVL), and 178-198 (FFTFHFLLPFTIIALTMLHLL). The heme b site is built by His-83 and His-97. Residues His-182 and His-196 each contribute to the heme b site. His-201 provides a ligand contact to a ubiquinone. A run of 4 helical transmembrane segments spans residues 226 to 246 (YKDLLGATLMITTLLTLVLFS), 288 to 308 (LGGVLALLFSILILMIVPLLH), 320 to 340 (FSQTLFWLLISNVLILTWIGG), and 347 to 367 (FIIIGQLASVTYFTLFLVVMP).

This sequence belongs to the cytochrome b family. In terms of assembly, the cytochrome bc1 complex contains 3 respiratory subunits (MT-CYB, CYC1 and UQCRFS1), 2 core proteins (UQCRC1 and UQCRC2) and probably 6 low-molecular weight proteins. Heme b is required as a cofactor.

The protein resides in the mitochondrion inner membrane. In terms of biological role, component of the ubiquinol-cytochrome c reductase complex (complex III or cytochrome b-c1 complex) that is part of the mitochondrial respiratory chain. The b-c1 complex mediates electron transfer from ubiquinol to cytochrome c. Contributes to the generation of a proton gradient across the mitochondrial membrane that is then used for ATP synthesis. The polypeptide is Cytochrome b (MT-CYB) (Iguana iguana (Common iguana)).